The primary structure comprises 314 residues: Nodulation protein D 1 (314 aa).

Positions 6-63 constitute an HTH lysR-type domain; it reads LDLNLLVALDALMTERNLTAAARSINLSQPAMSAAVGRLRTYFNDDLFTMVGRELVPT. The H-T-H motif DNA-binding region spans 23–42; it reads LTAAARSINLSQPAMSAAVG.

This sequence belongs to the LysR transcriptional regulatory family.

NodD regulates the expression of the nodABCFE genes which encode other nodulation proteins. NodD is also a negative regulator of its own expression. Binds flavonoids as inducers. This Rhizobium leguminosarum bv. phaseoli protein is Nodulation protein D 1 (nodD1).